The sequence spans 56 residues: Photosystem II reaction center protein K (56 aa).

Residues 1–19 constitute a propeptide that is removed on maturation; sequence MFNIFLDDAFIHSNNPFFG. A helical membrane pass occupies residues 35–55; that stretch reads MPIIPVLSFLLAFVWQAAVSF.

The protein belongs to the PsbK family. As to quaternary structure, PSII is composed of 1 copy each of membrane proteins PsbA, PsbB, PsbC, PsbD, PsbE, PsbF, PsbH, PsbI, PsbJ, PsbK, PsbL, PsbM, PsbT, PsbX, PsbY, PsbZ, Psb30/Ycf12, at least 3 peripheral proteins of the oxygen-evolving complex and a large number of cofactors. It forms dimeric complexes.

It localises to the plastid. The protein resides in the chloroplast thylakoid membrane. In terms of biological role, one of the components of the core complex of photosystem II (PSII). PSII is a light-driven water:plastoquinone oxidoreductase that uses light energy to abstract electrons from H(2)O, generating O(2) and a proton gradient subsequently used for ATP formation. It consists of a core antenna complex that captures photons, and an electron transfer chain that converts photonic excitation into a charge separation. This is Photosystem II reaction center protein K from Pinus thunbergii (Japanese black pine).